We begin with the raw amino-acid sequence, 209 residues long: Large ribosomal subunit protein bL9 (209 aa).

The segment at Ser184–Pro209 is disordered.

The protein belongs to the bacterial ribosomal protein bL9 family.

Binds to the 23S rRNA. In Dinoroseobacter shibae (strain DSM 16493 / NCIMB 14021 / DFL 12), this protein is Large ribosomal subunit protein bL9.